Reading from the N-terminus, the 256-residue chain is Protein TV0584 (256 aa).

It belongs to the CinA family.

The chain is Protein TV0584 from Thermoplasma volcanium (strain ATCC 51530 / DSM 4299 / JCM 9571 / NBRC 15438 / GSS1).